We begin with the raw amino-acid sequence, 182 residues long: Transcription termination/antitermination protein NusG (182 aa).

The 33-residue stretch at 131-163 (VGEQVRIKSGPFANQVGEVQEIEADKFKLTVLV) folds into the KOW domain.

This sequence belongs to the NusG family.

Functionally, participates in transcription elongation, termination and antitermination. The sequence is that of Transcription termination/antitermination protein NusG from Staphylococcus carnosus (strain TM300).